Reading from the N-terminus, the 146-residue chain is 3-hydroxyacyl-[acyl-carrier-protein] dehydratase FabZ (146 aa).

His-48 is a catalytic residue.

It belongs to the thioester dehydratase family. FabZ subfamily.

The protein resides in the cytoplasm. The catalysed reaction is a (3R)-hydroxyacyl-[ACP] = a (2E)-enoyl-[ACP] + H2O. Its function is as follows. Involved in unsaturated fatty acids biosynthesis. Catalyzes the dehydration of short chain beta-hydroxyacyl-ACPs and long chain saturated and unsaturated beta-hydroxyacyl-ACPs. This Campylobacter jejuni subsp. jejuni serotype O:6 (strain 81116 / NCTC 11828) protein is 3-hydroxyacyl-[acyl-carrier-protein] dehydratase FabZ.